The chain runs to 341 residues: uncharacterized protein (341 aa).

4 consecutive transmembrane segments (helical) span residues 8–28, 63–83, 171–191, and 317–337; these read LMLTFNEPLYLFLLVIFPLII, LMYFFTYSFLYLAAMVMVFAL, IYIMDLGNGSALGLGISIALS, and EFLVLAFCLLLVYFIFSKIFL. A VWFA domain is found at 101 to 305; it reads DIVIVLDISP…SKKENLERKI (205 aa).

It localises to the cell membrane. This is an uncharacterized protein from Borreliella burgdorferi (strain ATCC 35210 / DSM 4680 / CIP 102532 / B31) (Borrelia burgdorferi).